A 566-amino-acid chain; its full sequence is DNA ligase B (566 aa).

Residue Lys125 is the N6-AMP-lysine intermediate of the active site.

It belongs to the NAD-dependent DNA ligase family. LigB subfamily.

It carries out the reaction NAD(+) + (deoxyribonucleotide)n-3'-hydroxyl + 5'-phospho-(deoxyribonucleotide)m = (deoxyribonucleotide)n+m + AMP + beta-nicotinamide D-nucleotide.. In terms of biological role, catalyzes the formation of phosphodiester linkages between 5'-phosphoryl and 3'-hydroxyl groups in double-stranded DNA using NAD as a coenzyme and as the energy source for the reaction. The chain is DNA ligase B from Pseudomonas putida (strain ATCC 700007 / DSM 6899 / JCM 31910 / BCRC 17059 / LMG 24140 / F1).